A 32-amino-acid polypeptide reads, in one-letter code: Secreted protein F2 (32 aa).

It localises to the secreted. This is Secreted protein F2 from Globisporangium hypogynum (Pythium hypogynum).